A 377-amino-acid polypeptide reads, in one-letter code: Nitric oxide reductase FlRd-NAD(+) reductase (377 aa).

Belongs to the FAD-dependent oxidoreductase family. FAD serves as cofactor.

It is found in the cytoplasm. The enzyme catalyses 2 reduced [nitric oxide reductase rubredoxin domain] + NAD(+) + H(+) = 2 oxidized [nitric oxide reductase rubredoxin domain] + NADH. It functions in the pathway nitrogen metabolism; nitric oxide reduction. Functionally, one of at least two accessory proteins for anaerobic nitric oxide (NO) reductase. Reduces the rubredoxin moiety of NO reductase. In Escherichia coli O157:H7, this protein is Nitric oxide reductase FlRd-NAD(+) reductase.